A 1436-amino-acid polypeptide reads, in one-letter code: MDQDVMDFFDFSKEFKREVAPQGYISSDPKMMATDSIDSKVPKREVIGTEYVTEIVAKEKGLLNRTLRDECPQSKRKHTLDDLDTDDEEEETEIRRDDEYYKKYRFNLNRDKNLPIYAKREEILAAINANPVVILKGETGCGKTTQVPQYILDEGYKSGKYCNIVVTQPRRIAAISIANRVCQEREWQQDTVCSYQVGLHRPTSLEDTRLLYCTTGVLLNNLIRNKTLTHYTHIVLDEVHERDQDMDFLLIVVRRLLATNSRHVKIILMSATIDARELSDYFTTTNSIPPVISASHGRKHSIEKFYRDQMGSIKWKEEEDDQLVPQINDHGYRAAVKIIMVIDNMEREGAIHSRMSYDEALRYGAVLIFLPGIYEIDTMAENITLMLENDRNVKVFIVRCFSLMTPENQRDVFHPPPPGFRKIILTTNIAESSITVPDVSYVIDFCLTKVLVTDTATNFSSLRLTWASKANCRQRAGRVGRLRSGRVYRMVNKSFYQREMSEFGIPEMLRLPLQNSVLRAKELEMGSPVEILALALSPPNLSDIQNTILLLKEVGALFLTVDGVYNAMDGDVTYWGTIMSRLPLDPRLSRLIILGYVFNLLEEAIIMAAGLSMRGLYVHEGSSSRSTRAQFDSFWMHYIFADGSGSDLVAIWRVYLTYLNMVEIGHEQESAIRWANRFHVSLRSLKEMHLLVQELRVRCTNLGLIPFSVNPSQIMDDREKSFILKVIIAGAFYPNYFTRSKEMWNEHDRHIYQTISGHDPCRTVYFTNFGPSCMGELYTRRIKDFFHDARIPPENMDVTFQPGSEKVFVTFKQDDCVADSSKLVSVPGRVQSEVYKAVRMRLSCMQRIIRIMRPKQFMNYVQERGIGDVIEGRWIPPTKPLNVELLALPSVFSKTITGLITGIINCGKFYFQPLSLAECIRNMSEIFNAPQQLRKYVVDACDISKGMMVLAKRDSNFQRATVIRPENQSNRQPMFYVRFIDYGDCALLPMQQLRFMSEELIQQYGDLPPRVFECRLALVQPSSMVHGNYSWPTAANDLLQFVAKCGRIDIEVYSLFNNVAAVLIHMRNGTINDKLVAQKLCRRSDEDYMSRKDHDFRLRSQESGRYLSSAERQQINEEYLRSCQLPQDFDLPPPPQDLCGTNVRLKGPYSPLECSMQSIIRVGSSKRVNIDSASVNAVLLDTDPQDHHDHLIVAHATVESPNGQTLTARGTTLMPNVQGYGALMVMLFCPTMQLKCNEEGTSYVSILAGLGCDPVTGEPYYAEHDVLINLDVNILEDDLVLINQIRYYIDSVFFNFKEENYPAVSVNERESIYTQLRSLIKRLLSKDRSYIGKNMSNSDFVWETNPELPMPNEPFGKRAIFPMHSLTELKEDDMGRLMNLRENCSMLHKWRNFEGTLPHMTCKLCNQLLESVPQLRLHLLTILHRDREKQIDFCNQ.

Positions 124–291 constitute a Helicase ATP-binding domain; it reads LAAINANPVV…FTTTNSIPPV (168 aa). An ATP-binding site is contributed by 137–144; the sequence is GETGCGKT. Positions 237–240 match the DEAH box motif; the sequence is DEVH. The Helicase C-terminal domain maps to 337–524; the sequence is KIIMVIDNME…NSVLRAKELE (188 aa). One can recognise a Tudor domain in the interval 940–1003; that stretch reads ACDISKGMMV…RFMSEELIQQ (64 aa).

The protein belongs to the DEAD box helicase family. DEAH subfamily.

It localises to the cytoplasm. It catalyses the reaction ATP + H2O = ADP + phosphate + H(+). Its function is as follows. Probable ATP-binding RNA helicase which plays a central role during spermatogenesis and oogenesis by repressing transposable elements and preventing their mobilization, which is essential for the germline integrity. Acts via the piRNA metabolic process, which mediates the repression of transposable elements during meiosis by forming complexes composed of piRNAs and Piwi and govern the methylation and subsequent repression of transposons. Involved in the repression of LTR retrotransposon copia. Also involved in telomere regulation by repressing specialized telomeric retroelements HeT-A, TAHRE, and TART; Drosophila telomeres being maintained by transposition of specialized telomeric retroelements. Involved in telomeric trans-silencing, a repression mechanism by which a transposon or a transgene inserted in subtelomeric heterochromatin has the capacity to repress in trans in the female germline, a homologous transposon, or transgene located in euchromatin. Involved in the repression of testis-expressed Stellate genes by the homologous Su(Ste) repeats. Required for anteroposterior and dorsoventral axis formation during oogenesis. The chain is Probable ATP-dependent RNA helicase spindle-E (spn-E) from Drosophila yakuba (Fruit fly).